Reading from the N-terminus, the 178-residue chain is Ribosome maturation factor RimP (178 aa).

This sequence belongs to the RimP family.

The protein resides in the cytoplasm. Its function is as follows. Required for maturation of 30S ribosomal subunits. This Corynebacterium glutamicum (strain ATCC 13032 / DSM 20300 / JCM 1318 / BCRC 11384 / CCUG 27702 / LMG 3730 / NBRC 12168 / NCIMB 10025 / NRRL B-2784 / 534) protein is Ribosome maturation factor RimP.